A 453-amino-acid chain; its full sequence is Aryl hydrocarbon receptor nuclear translocator homolog (453 aa).

Positions 44–97 (FARENHSEIERRRRNKMTHYINELAEMVPQCASLGRKPDKLTILRMAVSHMKGI) constitute a bHLH domain. PAS domains lie at 115-193 (DQEL…LDLK) and 277-347 (ASMP…LSDQ). Positions 348–392 (PMRINIRVRTSTDYIPCTVSAYKFMNPYSEQFEYVVATHQIAPQE) constitute a PAC domain. The disordered stretch occupies residues 410–453 (EFGELGGAPSAVDYGQSSSGGWRPEAQGAPQAQWQWDPMNGYNQ).

Interacts with hif-1. Heterodimer; efficient DNA binding requires dimerization with another bHLH protein. Forms a heterodimer with ahr-1; binds DNA as heterodimer. Forms a heterodimer with PAS domain-containing protein cky-1; binds DNA as heterodimer. In terms of tissue distribution, expressed in many cell types throughout development, including hypodermal cells, intestinal cells, pharyngeal cells, and neurons. Expressed in every cell during embryo.

The protein localises to the nucleus. Functionally, transcription factor. Efficient DNA binding requires dimerization with another bHLH protein, such as cky-1 or ahr-1. Regulates transcription of target genes, probably acting in complex with cky-1. Has a role in cellular differentiation. Required for pharyngeal development. In collaboration with ahr-1 it is involved in RMEL/R and SDQR neuron cell migration. Acts in the cellular response to hypoxia. Involved in aggregation behavior by regulating soluble guanylate cyclase gene expression in the URX neurons. The sequence is that of Aryl hydrocarbon receptor nuclear translocator homolog from Caenorhabditis elegans.